Consider the following 723-residue polypeptide: Homeobox protein vnd (723 aa).

Disordered stretches follow at residues Met-1 to Pro-115, Ala-224 to Pro-307, Gly-465 to Arg-549, and His-703 to Pro-723. The span at Thr-10 to Asn-22 shows a compositional bias: basic and acidic residues. Over residues Ser-23 to Pro-36 the composition is skewed to low complexity. The segment covering Gln-37–Ala-48 has biased composition (polar residues). Over residues Leu-61–Phe-92 the composition is skewed to basic and acidic residues. The span at Ser-97–Ser-111 shows a compositional bias: low complexity. Residues His-226 to Ala-235 are compositionally biased toward basic and acidic residues. Residues Glu-237 to Ser-255 are compositionally biased toward polar residues. Positions Glu-278–Ala-289 are enriched in basic and acidic residues. Over residues His-298–Pro-307 the composition is skewed to basic residues. The span at Asn-483–Asn-493 shows a compositional bias: low complexity. A compositionally biased stretch (acidic residues) spans Leu-512–Asp-528. Positions Lys-545–Gln-604 form a DNA-binding region, homeobox. Residues His-703 to Ala-716 are compositionally biased toward basic residues.

It belongs to the NK-2 homeobox family. As to expression, expressed in the CNS and midgut.

The protein resides in the nucleus. Its function is as follows. Probable transcriptional regulator involved in the regulation of the proneural AS-C genes and the neurogenic genes of the enhancer of split complex. Could specifically activate proneural genes in the ventral-most neuroectoderm. The polypeptide is Homeobox protein vnd (vnd) (Drosophila melanogaster (Fruit fly)).